The sequence spans 556 residues: MTMLKDPSKKYRAFPTIDLPDRTWPSKTIDAVPIWCSSDLRDGNQSLIEPMDAAKKLRFWKTLVSVGVKEIEASFPSASQTDFDFVRTLIEDGHIPDDTTIQVLTQAREDLIARTFESLRGAKKAIVHLYNATCPSFRRIVFNQDKAGVKEIAVNAAKLFVKYAAQQPETQWTFQYSPETFSATELEFAKEVCDAVIEVWNPTPENKVILNLPATVEVATPNIYADQIEWFGRNITRRDSVLISLHTHNDRGTGVAATELGLMAGADRVEGCLFGNGERTGNVDLVTVALNLYTQGINPGLDFSDIDGVRKVVEECNQIPVHPRHPYVGDLVHTAFSGSHQDAIRKGFTQQKEGELWEVPYLPIDPADIGRSYEAVIRVNSQSGKGGIAYLLEQEYGISLPRRMQIEFSQVVQGETDRLGLEMTAEQIHSLLRREYLQANVPYALISHKLQEENGNSSVDAEVHVDGETQHWRGKGKGALEALVAGLPVAVEIMDYNEHAIGSGTTAKAAAYIELRVNGERAVHGVGIDENITTASFRALFSALNRSLSQTQAKAA.

The 275-residue stretch at 33–307 (PIWCSSDLRD…NPGLDFSDID (275 aa)) folds into the Pyruvate carboxyltransferase domain. Positions 42, 246, 248, and 282 each coordinate Mg(2+). Positions 439 to 556 (ANVPYALISH…SLSQTQAKAA (118 aa)) are regulatory domain.

The protein belongs to the alpha-IPM synthase/homocitrate synthase family. LeuA type 2 subfamily. Homodimer. The cofactor is Mg(2+).

It localises to the cytoplasm. The enzyme catalyses 3-methyl-2-oxobutanoate + acetyl-CoA + H2O = (2S)-2-isopropylmalate + CoA + H(+). The protein operates within amino-acid biosynthesis; L-leucine biosynthesis; L-leucine from 3-methyl-2-oxobutanoate: step 1/4. Its function is as follows. Catalyzes the condensation of the acetyl group of acetyl-CoA with 3-methyl-2-oxobutanoate (2-ketoisovalerate) to form 3-carboxy-3-hydroxy-4-methylpentanoate (2-isopropylmalate). In Pseudomonas syringae pv. syringae (strain B728a), this protein is 2-isopropylmalate synthase.